Here is a 779-residue protein sequence, read N- to C-terminus: Catalase-peroxidase (779 aa).

The tryptophyl-tyrosyl-methioninium (Trp-Tyr) (with M-296) cross-link spans 148 to 270 (WHSAGTYRIT…LGAVQMGLIY (123 aa)). Catalysis depends on His149, which acts as the Proton acceptor. The tryptophyl-tyrosyl-methioninium (Tyr-Met) (with W-148) cross-link spans 270–296 (YVNPEGPNGKPDPIAAAKDIRETFFRM). His311 lines the heme b pocket.

The protein belongs to the peroxidase family. Peroxidase/catalase subfamily. In terms of assembly, homodimer or homotetramer. It depends on heme b as a cofactor. In terms of processing, formation of the three residue Trp-Tyr-Met cross-link is important for the catalase, but not the peroxidase activity of the enzyme.

It carries out the reaction H2O2 + AH2 = A + 2 H2O. It catalyses the reaction 2 H2O2 = O2 + 2 H2O. Bifunctional enzyme with both catalase and broad-spectrum peroxidase activity. The chain is Catalase-peroxidase from Bradyrhizobium diazoefficiens (strain JCM 10833 / BCRC 13528 / IAM 13628 / NBRC 14792 / USDA 110).